A 269-amino-acid polypeptide reads, in one-letter code: Signal recognition particle receptor subunit beta (269 aa).

The helical transmembrane segment at 35–55 threads the bilayer; that stretch reads LLSVAVALLAVLLTLVFWKFI. GTP-binding positions include 69–77 and 90–93; these read GLCDSGKTL and TQTS. Position 110 is a phosphoserine (Ser-110). GTP-binding positions include Gly-118 and 178 to 181; that span reads NKQD. Position 212 is a phosphothreonine (Thr-212). Position 246 (Ala-246) interacts with GTP.

This sequence belongs to the SRP receptor beta subunit family. Heterodimer with SRPRA.

It localises to the endoplasmic reticulum membrane. Component of the SRP (signal recognition particle) receptor. Ensures, in conjunction with the signal recognition particle, the correct targeting of the nascent secretory proteins to the endoplasmic reticulum membrane system. May mediate the membrane association of SR. The polypeptide is Signal recognition particle receptor subunit beta (Srprb) (Mus musculus (Mouse)).